Reading from the N-terminus, the 113-residue chain is MKITMFFAALSAASGVFAAPAQAAAAAKDLSIGAGVGIGIGAGVGSYGYPYGAYPGWRLQLLPLRWLPLRRLPLRIPILPMVNTLCSVACAQNPRPAHLLIIKPLTPEQFLFL.

The signal sequence occupies residues 1–18; it reads MKITMFFAALSAASGVFA. 6 repeat units span residues 32-37, 40-45, 46-49, 50-53, 59-65, and 69-75. Positions 32-45 are 2 X 6 AA repeats; the sequence is IGAGVGIGIGAGVG. The segment at 46–53 is 2 X 4 AA approximate tandem repeats; the sequence is SYGYPYGA. Residues 59 to 75 form a 2 X 7 AA approximate repeats region; that stretch reads LQLLPLRWLPLRRLPLR.

It localises to the secreted. This is Protein USP2 (USP2) from Puccinia graminis (Black stem rust fungus).